Reading from the N-terminus, the 510-residue chain is Proline--tRNA ligase 2 (510 aa).

The protein belongs to the class-II aminoacyl-tRNA synthetase family. ProS type 3 subfamily. Homodimer.

The protein resides in the cytoplasm. The enzyme catalyses tRNA(Pro) + L-proline + ATP = L-prolyl-tRNA(Pro) + AMP + diphosphate. In terms of biological role, catalyzes the attachment of proline to tRNA(Pro) in a two-step reaction: proline is first activated by ATP to form Pro-AMP and then transferred to the acceptor end of tRNA(Pro). This Anaeromyxobacter dehalogenans (strain 2CP-C) protein is Proline--tRNA ligase 2.